The primary structure comprises 212 residues: Large ribosomal subunit protein uL3 (212 aa).

Belongs to the universal ribosomal protein uL3 family. As to quaternary structure, part of the 50S ribosomal subunit. Forms a cluster with proteins L14 and L19.

Functionally, one of the primary rRNA binding proteins, it binds directly near the 3'-end of the 23S rRNA, where it nucleates assembly of the 50S subunit. This chain is Large ribosomal subunit protein uL3, found in Ruminiclostridium cellulolyticum (strain ATCC 35319 / DSM 5812 / JCM 6584 / H10) (Clostridium cellulolyticum).